A 300-amino-acid chain; its full sequence is Free fatty acid receptor 1 (300 aa).

Topologically, residues 1-8 (MDLPPQLS) are extracellular. Residues 9–31 (FALYVSAFALGFPLNLLAIRGAV) form a helical membrane-spanning segment. Topologically, residues 32 to 41 (SHAKLRLTPS) are cytoplasmic. Residues 42–64 (LVYTLHLGCSDLLLAITLPLKAV) form a helical membrane-spanning segment. The Extracellular portion of the chain corresponds to 65 to 79 (EALASGAWPLPLPFC). A disulfide bond links C79 and C170. A helical membrane pass occupies residues 80–101 (PVFALAHFAPLYAGGGFLAALS). Over 102–121 (AGRYLGAAFPFGYQAIRRPR) the chain is Cytoplasmic. Residues 122–142 (YSWGVCVAIWALVLCHLGLAL) form a helical membrane-spanning segment. The Extracellular portion of the chain corresponds to 143–178 (GLETSGSWLDNSTSSLGINIPVNGSPVCLEAWDPDS). The N-linked (GlcNAc...) asparagine glycan is linked to N153. Residues 179–200 (ARPARLSFSILLFFLPLVITAF) form a helical membrane-spanning segment. Residues 201–223 (CYVGCLRALVRSGLSHKRKLRAA) are Cytoplasmic-facing. The chain crosses the membrane as a helical span at residues 224 to 248 (WVAGGALLTLLLCLGPYNASNVASF). Residues 249-256 (INPDLGGS) are Extracellular-facing. Residues 257–279 (WRKLGLITGAWSVVLNPLVTGYL) traverse the membrane as a helical segment. Residues 280–300 (GTGPGRGTICVTRTQRGTIQK) lie on the Cytoplasmic side of the membrane.

It belongs to the G-protein coupled receptor 1 family. As to expression, expressed in pancreatic islet beta cells (at protein level). Expressed in pancreatic islet beta cells.

The protein resides in the cell membrane. Is also activated by synthetic agonists, such as AM-8182, AM-6331 and TAK-875 (fasiglifam). AM-8182 is a full agonist, while AM-6331 and TAK-875 (fasiglifam) are partial agonists that potentiate the activity of the endogenous ligands, such as alpha-linolenic acid and gamma-linolenic acid. In terms of biological role, G-protein coupled receptor for medium and long chain saturated and unsaturated fatty acids that plays an important role in glucose homeostasis. Fatty acid binding increases glucose-stimulated insulin secretion, and may also enhance the secretion of glucagon-like peptide 1 (GLP-1). May also play a role in bone homeostasis; receptor signaling activates pathways that inhibit osteoclast differentiation. Ligand binding leads to a conformation change that triggers signaling via G-proteins that activate phospholipase C, leading to an increase of the intracellular calcium concentration. Seems to act through a G(q) and G(i)-mediated pathway. Mediates the anti-inflammatory effects of omega-3 polyunsaturated fatty acids (PUFAs) via inhibition of NLRP3 inflammasome activation. The protein is Free fatty acid receptor 1 (Ffar1) of Mus musculus (Mouse).